The following is a 371-amino-acid chain: MPHQQMLILFGLLPVATNISTWWNFGSMLLACSSMQVLTGFFLAVHYTANINLAFSSIVHITRDVPYGWMMQNLHAIGASMFFICIYIHIARGLYYGSYLNKKTWLSGTTLLIMLMVTAFFGXXXXXXXXXXXXXXXXXXXXXXXXXXXXXXXXXXXXXXXXXXXXXXXXXXXXXXXXXXXXXXXXXXXXXXXXXXXXXXXXXNSDIDKIPFHPYHTYKDLLMLSLMVLMLLMTVSFLPDIFNDPENFSKANPLVTPQHIKPEWYFLFAYGILRSIPNKLGGALALAMSIMILLTVPFTHTSTIRSMMFRPIMQLMFWTLVATFMVITWAATKPVEPPFTMISQIASTIYFLFFIMNPIAGWIENNIMKDN.

The next 8 helical transmembrane spans lie at 25-45 (FGSMLLACSSMQVLTGFFLAV), 69-90 (WMMQNLHAIGASMFFICIYIHI), 105-125 (WLSGTTLLIMLMVTAFFGXXX), 170-190 (XXXXXXXXXXXXXXXXXXXXX), 218-238 (YKDLLMLSLMVLMLLMTVSFL), 280-300 (LGGALALAMSIMILLTVPFTH), 312-332 (IMQLMFWTLVATFMVITWAAT), and 339-358 (FTMISQIASTIYFLFFIMNP). 2 residues coordinate heme b: histidine 75 and histidine 89. Heme b is bound by residues residue 174 and residue 188.

It belongs to the cytochrome b family. In terms of assembly, the cytochrome bc1 complex contains 3 respiratory subunits (MT-CYB, CYC1 and UQCRFS1), 2 core proteins (UQCRC1 and UQCRC2) and probably 6 low-molecular weight proteins. The cofactor is heme b.

It is found in the mitochondrion inner membrane. Component of the ubiquinol-cytochrome c reductase complex (complex III or cytochrome b-c1 complex) that is part of the mitochondrial respiratory chain. The b-c1 complex mediates electron transfer from ubiquinol to cytochrome c. Contributes to the generation of a proton gradient across the mitochondrial membrane that is then used for ATP synthesis. The protein is Cytochrome b (MT-CYB) of Eryx tataricus (Tartar sand boa).